A 60-amino-acid polypeptide reads, in one-letter code: UPF0434 protein ESA_02427 (60 aa).

It belongs to the UPF0434 family.

The protein is UPF0434 protein ESA_02427 of Cronobacter sakazakii (strain ATCC BAA-894) (Enterobacter sakazakii).